A 149-amino-acid polypeptide reads, in one-letter code: Large ribosomal subunit protein uL13 (149 aa).

This sequence belongs to the universal ribosomal protein uL13 family. Part of the 50S ribosomal subunit.

This protein is one of the early assembly proteins of the 50S ribosomal subunit, although it is not seen to bind rRNA by itself. It is important during the early stages of 50S assembly. The protein is Large ribosomal subunit protein uL13 of Borrelia recurrentis (strain A1).